Here is a 311-residue protein sequence, read N- to C-terminus: MQDFAKKKINIKSPAKINLHLEVIGKREDGFHELAMIMQNIDLADYLEFEINNEGLIKLESDCNDLSLSDDNLIVKSANLLRKKSNIDYGANIFLRKNIPIGAGLAGGSSNAAATLIGLNNLWDLKLDQETLCSLASTLGSDIPFFINGGIQLCFGRGEILEKLDSTLEYGAILLKNPNVSVSTAETYKKYSNRFCDQYLTDREMIENIRKNLRDNGLNNLNFDNQHLSIKNDLQLVVENENDSVKQALYLLSKLENCLTFSMSGSGPTCFALFKDKETAKKELTANSKLFKDKGYDSWVCTFLEKGITFI.

Residue lysine 16 is part of the active site. 100–110 (PIGAGLAGGSS) serves as a coordination point for ATP. Aspartate 142 is an active-site residue.

Belongs to the GHMP kinase family. IspE subfamily.

The enzyme catalyses 4-CDP-2-C-methyl-D-erythritol + ATP = 4-CDP-2-C-methyl-D-erythritol 2-phosphate + ADP + H(+). It participates in isoprenoid biosynthesis; isopentenyl diphosphate biosynthesis via DXP pathway; isopentenyl diphosphate from 1-deoxy-D-xylulose 5-phosphate: step 3/6. Functionally, catalyzes the phosphorylation of the position 2 hydroxy group of 4-diphosphocytidyl-2C-methyl-D-erythritol. The protein is 4-diphosphocytidyl-2-C-methyl-D-erythritol kinase of Prochlorococcus marinus (strain AS9601).